The sequence spans 193 residues: Holliday junction branch migration complex subunit RuvA (193 aa).

Residues 1–64 (MIGRIAGTLI…EDAHLLYGFG (64 aa)) form a domain I region. Positions 65–143 (TAAERETFRQ…ADLGTVPGGP (79 aa)) are domain II. The flexible linker stretch occupies residues 144–151 (AVSDDAVD). Residues 151–193 (DVLNALLALGYSDKEAALAIKQVPAGTGVSEGIKLALKALSKG) are domain III.

It belongs to the RuvA family. Homotetramer. Forms an RuvA(8)-RuvB(12)-Holliday junction (HJ) complex. HJ DNA is sandwiched between 2 RuvA tetramers; dsDNA enters through RuvA and exits via RuvB. An RuvB hexamer assembles on each DNA strand where it exits the tetramer. Each RuvB hexamer is contacted by two RuvA subunits (via domain III) on 2 adjacent RuvB subunits; this complex drives branch migration. In the full resolvosome a probable DNA-RuvA(4)-RuvB(12)-RuvC(2) complex forms which resolves the HJ.

It localises to the cytoplasm. In terms of biological role, the RuvA-RuvB-RuvC complex processes Holliday junction (HJ) DNA during genetic recombination and DNA repair, while the RuvA-RuvB complex plays an important role in the rescue of blocked DNA replication forks via replication fork reversal (RFR). RuvA specifically binds to HJ cruciform DNA, conferring on it an open structure. The RuvB hexamer acts as an ATP-dependent pump, pulling dsDNA into and through the RuvAB complex. HJ branch migration allows RuvC to scan DNA until it finds its consensus sequence, where it cleaves and resolves the cruciform DNA. The polypeptide is Holliday junction branch migration complex subunit RuvA (Ralstonia pickettii (strain 12J)).